A 133-amino-acid chain; its full sequence is Vascular endothelial growth factor homolog (133 aa).

A signal peptide spans 1–20; the sequence is MKLLVGILVAVCLHQYLLNA. 3 disulfide bridges follow: Cys36/Cys78, Cys67/Cys112, and Cys71/Cys114. Asn85 carries N-linked (GlcNAc...) asparagine; by host glycosylation.

Belongs to the PDGF/VEGF growth factor family. Homodimer; disulfide-linked.

Its subcellular location is the secreted. Functionally, induces endothelial proliferation. The sequence is that of Vascular endothelial growth factor homolog from Orf virus (strain NZ2) (OV NZ-2).